Reading from the N-terminus, the 917-residue chain is Alanine--tRNA ligase (917 aa).

Residues His-592, His-596, Cys-694, and His-698 each coordinate Zn(2+).

This sequence belongs to the class-II aminoacyl-tRNA synthetase family. Zn(2+) serves as cofactor.

The protein localises to the cytoplasm. The enzyme catalyses tRNA(Ala) + L-alanine + ATP = L-alanyl-tRNA(Ala) + AMP + diphosphate. Catalyzes the attachment of alanine to tRNA(Ala) in a two-step reaction: alanine is first activated by ATP to form Ala-AMP and then transferred to the acceptor end of tRNA(Ala). Also edits incorrectly charged Ser-tRNA(Ala) and Gly-tRNA(Ala) via its editing domain. This is Alanine--tRNA ligase from Sorangium cellulosum (strain So ce56) (Polyangium cellulosum (strain So ce56)).